Reading from the N-terminus, the 471-residue chain is Alpha-galactosidase 5 (471 aa).

Residues 1–18 (MFAFYFLTACTTLKGVFG) form the signal peptide. Cys42 and Cys74 are joined by a disulfide. Asp72 and Asp73 together coordinate substrate. Asn105 carries an N-linked (GlcNAc...) asparagine glycan. The cysteines at positions 121 and 151 are disulfide-linked. Lys147 contacts substrate. Asp149 acts as the Nucleophile in catalysis. Asn175 is a glycosylation site (N-linked (GlcNAc...) asparagine). Arg205 serves as a coordination point for substrate. Residue Asp209 is the Proton donor of the active site. Cystine bridges form between Cys221/Cys237 and Cys223/Cys230. Gln251 is a substrate binding site. Asn270, Asn370, Asn403, Asn422, Asn435, and Asn454 each carry an N-linked (GlcNAc...) asparagine glycan.

This sequence belongs to the glycosyl hydrolase 27 family. As to quaternary structure, homotetramer.

The protein localises to the secreted. The catalysed reaction is Hydrolysis of terminal, non-reducing alpha-D-galactose residues in alpha-D-galactosides, including galactose oligosaccharides, galactomannans and galactolipids.. In Saccharomyces cerevisiae (Baker's yeast), this protein is Alpha-galactosidase 5 (MEL5).